A 303-amino-acid polypeptide reads, in one-letter code: N-acetyl-D-glucosamine kinase (303 aa).

ATP contacts are provided by residues 4 to 11 (GFDIGGTK) and 133 to 140 (GVGGGLVL). His157, Cys177, Cys179, and Cys184 together coordinate Zn(2+).

The protein belongs to the ROK (NagC/XylR) family. NagK subfamily.

It catalyses the reaction N-acetyl-D-glucosamine + ATP = N-acetyl-D-glucosamine 6-phosphate + ADP + H(+). It functions in the pathway cell wall biogenesis; peptidoglycan recycling. Catalyzes the phosphorylation of N-acetyl-D-glucosamine (GlcNAc) derived from cell-wall degradation, yielding GlcNAc-6-P. The protein is N-acetyl-D-glucosamine kinase of Salmonella gallinarum (strain 287/91 / NCTC 13346).